A 302-amino-acid polypeptide reads, in one-letter code: Sulfate adenylyltransferase subunit 2 (302 aa).

The tract at residues 280-302 (RQGRVIDHDSSGSMEKKKREGYF) is disordered.

The protein belongs to the PAPS reductase family. CysD subfamily. Heterodimer composed of CysD, the smaller subunit, and CysN.

The catalysed reaction is sulfate + ATP + H(+) = adenosine 5'-phosphosulfate + diphosphate. Its pathway is sulfur metabolism; hydrogen sulfide biosynthesis; sulfite from sulfate: step 1/3. Its function is as follows. With CysN forms the ATP sulfurylase (ATPS) that catalyzes the adenylation of sulfate producing adenosine 5'-phosphosulfate (APS) and diphosphate, the first enzymatic step in sulfur assimilation pathway. APS synthesis involves the formation of a high-energy phosphoric-sulfuric acid anhydride bond driven by GTP hydrolysis by CysN coupled to ATP hydrolysis by CysD. This is Sulfate adenylyltransferase subunit 2 from Shewanella amazonensis (strain ATCC BAA-1098 / SB2B).